We begin with the raw amino-acid sequence, 206 residues long: Large ribosomal subunit protein uL4 (206 aa).

The span at 48–59 shows a compositional bias: basic and acidic residues; the sequence is THDTKTRSEVRG. The tract at residues 48-77 is disordered; the sequence is THDTKTRSEVRGGGRKPWRQKGTGRARHGS. Over residues 60–77 the composition is skewed to basic residues; sequence GGRKPWRQKGTGRARHGS.

This sequence belongs to the universal ribosomal protein uL4 family. In terms of assembly, part of the 50S ribosomal subunit.

One of the primary rRNA binding proteins, this protein initially binds near the 5'-end of the 23S rRNA. It is important during the early stages of 50S assembly. It makes multiple contacts with different domains of the 23S rRNA in the assembled 50S subunit and ribosome. Its function is as follows. Forms part of the polypeptide exit tunnel. The sequence is that of Large ribosomal subunit protein uL4 from Pelotomaculum thermopropionicum (strain DSM 13744 / JCM 10971 / SI).